The following is a 95-amino-acid chain: MAIEHADVLRAAHLARVGLGEDEATGYVDDLSRILEMVDQLQAVDTQGIAPLAHPLDATQRLRPDEVTEHNQRERFQACAPVTEGGLYLVPRVVE.

It belongs to the GatC family. Heterotrimer of A, B and C subunits.

The enzyme catalyses L-glutamyl-tRNA(Gln) + L-glutamine + ATP + H2O = L-glutaminyl-tRNA(Gln) + L-glutamate + ADP + phosphate + H(+). It carries out the reaction L-aspartyl-tRNA(Asn) + L-glutamine + ATP + H2O = L-asparaginyl-tRNA(Asn) + L-glutamate + ADP + phosphate + 2 H(+). In terms of biological role, allows the formation of correctly charged Asn-tRNA(Asn) or Gln-tRNA(Gln) through the transamidation of misacylated Asp-tRNA(Asn) or Glu-tRNA(Gln) in organisms which lack either or both of asparaginyl-tRNA or glutaminyl-tRNA synthetases. The reaction takes place in the presence of glutamine and ATP through an activated phospho-Asp-tRNA(Asn) or phospho-Glu-tRNA(Gln). This is Aspartyl/glutamyl-tRNA(Asn/Gln) amidotransferase subunit C from Chromohalobacter salexigens (strain ATCC BAA-138 / DSM 3043 / CIP 106854 / NCIMB 13768 / 1H11).